The following is a 474-amino-acid chain: Glutathione synthetase (474 aa).

The residue at position 2 (Ala-2) is an N-acetylalanine. Residue Arg-125 participates in substrate binding. An ATP-binding site is contributed by Glu-144. The Mg(2+) site is built by Glu-144 and Asn-146. Substrate contacts are provided by residues Ile-148–Ser-151, Glu-214–Asn-216, Gln-220, and Arg-267–Tyr-270. ATP contacts are provided by residues Lys-305, Lys-364–Asn-373, Tyr-375, and Met-398–Thr-401. A Mg(2+)-binding site is contributed by Glu-368. Phosphoserine is present on Ser-415. Position 425 (Glu-425) interacts with ATP. Arg-450 provides a ligand contact to substrate. ATP is bound by residues Lys-452 and Asp-458. Val-461–Ala-462 contacts substrate.

Belongs to the eukaryotic GSH synthase family. In terms of assembly, homodimer. Mg(2+) is required as a cofactor.

It catalyses the reaction gamma-L-glutamyl-L-cysteine + glycine + ATP = glutathione + ADP + phosphate + H(+). Its pathway is sulfur metabolism; glutathione biosynthesis; glutathione from L-cysteine and L-glutamate: step 2/2. Its function is as follows. Catalyzes the production of glutathione from gamma-glutamylcysteine and glycine in an ATP-dependent manner. Glutathione (gamma-glutamylcysteinylglycine, GSH) is the most abundant intracellular thiol in living aerobic cells and is required for numerous processes including the protection of cells against oxidative damage, amino acid transport, the detoxification of foreign compounds, the maintenance of protein sulfhydryl groups in a reduced state and acts as a cofactor for a number of enzymes. This Macaca fascicularis (Crab-eating macaque) protein is Glutathione synthetase (GSS).